Consider the following 389-residue polypeptide: S-adenosylmethionine synthase (389 aa).

ATP is bound at residue histidine 15. Position 17 (aspartate 17) interacts with Mg(2+). Glutamate 43 contributes to the K(+) binding site. 2 residues coordinate L-methionine: glutamate 56 and glutamine 99. The tract at residues 99–109 is flexible loop; that stretch reads QSPDIAQGVNE. ATP contacts are provided by residues 166–168, 234–235, aspartate 243, 249–250, alanine 266, and lysine 270; these read DAK, RF, and RK. Aspartate 243 is an L-methionine binding site. Lysine 274 serves as a coordination point for L-methionine.

The protein belongs to the AdoMet synthase family. Homotetramer; dimer of dimers. Mg(2+) is required as a cofactor. Requires K(+) as cofactor.

Its subcellular location is the cytoplasm. It catalyses the reaction L-methionine + ATP + H2O = S-adenosyl-L-methionine + phosphate + diphosphate. Its pathway is amino-acid biosynthesis; S-adenosyl-L-methionine biosynthesis; S-adenosyl-L-methionine from L-methionine: step 1/1. Its function is as follows. Catalyzes the formation of S-adenosylmethionine (AdoMet) from methionine and ATP. The overall synthetic reaction is composed of two sequential steps, AdoMet formation and the subsequent tripolyphosphate hydrolysis which occurs prior to release of AdoMet from the enzyme. This chain is S-adenosylmethionine synthase, found in Neisseria gonorrhoeae (strain ATCC 700825 / FA 1090).